The sequence spans 426 residues: Histidine--tRNA ligase (426 aa).

It belongs to the class-II aminoacyl-tRNA synthetase family.

The protein resides in the cytoplasm. The catalysed reaction is tRNA(His) + L-histidine + ATP = L-histidyl-tRNA(His) + AMP + diphosphate + H(+). The polypeptide is Histidine--tRNA ligase (Saccharolobus solfataricus (strain ATCC 35092 / DSM 1617 / JCM 11322 / P2) (Sulfolobus solfataricus)).